The following is a 60-amino-acid chain: Large ribosomal subunit protein bL32 (60 aa).

This sequence belongs to the bacterial ribosomal protein bL32 family.

The polypeptide is Large ribosomal subunit protein bL32 (Streptococcus pneumoniae serotype 4 (strain ATCC BAA-334 / TIGR4)).